The sequence spans 316 residues: L-lactate dehydrogenase (316 aa).

NAD(+) is bound by residues Val-15, Asp-36, Arg-41, Tyr-66, and 80 to 81; that span reads GA. Substrate is bound by residues Gln-83, Arg-90, and 122–125; that span reads NPVD. NAD(+)-binding positions include 120 to 122 and Thr-145; that span reads ATN. Residue 150-153 participates in substrate binding; it reads DTAR. Beta-D-fructose 1,6-bisphosphate-binding residues include Arg-155 and His-170. The Proton acceptor role is filled by His-177. Tyr-222 is modified (phosphotyrosine). Thr-231 serves as a coordination point for substrate. Residues 287–316 form a disordered region; it reads DPGLSDEEREALRDSARALRDSRADLTVGT. Basic and acidic residues predominate over residues 296–310; that stretch reads EALRDSARALRDSRA.

It belongs to the LDH/MDH superfamily. LDH family. In terms of assembly, homotetramer.

The protein localises to the cytoplasm. It carries out the reaction (S)-lactate + NAD(+) = pyruvate + NADH + H(+). The protein operates within fermentation; pyruvate fermentation to lactate; (S)-lactate from pyruvate: step 1/1. With respect to regulation, allosterically activated by fructose 1,6-bisphosphate (FBP). Its function is as follows. Catalyzes the conversion of lactate to pyruvate. In Salinibacter ruber (strain DSM 13855 / M31), this protein is L-lactate dehydrogenase.